The sequence spans 362 residues: Prostaglandin E2 receptor EP2 subtype (362 aa).

Residues 1 to 24 (MDNFLNDSKLMEDCKSRQWLLSGE) lie on the Extracellular side of the membrane. Residue Asn6 is glycosylated (N-linked (GlcNAc...) asparagine). Residues 25 to 48 (SPAISSVMFSAGVLGNLIALALLA) traverse the membrane as a helical segment. The Cytoplasmic portion of the chain corresponds to 49–66 (RRWRGDTGCSAGSRTSIS). The chain crosses the membrane as a helical span at residues 67 to 92 (LFHVLVTELVLTDLLGTCLISPVVLA). The Extracellular segment spans residues 93–112 (SYSRNQTLVALAPESHACTY). A disulfide bridge links Cys110 with Cys188. A helical transmembrane segment spans residues 113 to 133 (FAFTMTFFSLATMLMLFAMAL). The Cytoplasmic portion of the chain corresponds to 134–152 (ERYLSIGYPYFYRRHLSRR). A helical membrane pass occupies residues 153-177 (GGLAVLPVIYGASLLFCSLPLLNYG). The Extracellular portion of the chain corresponds to 178 to 199 (EYVQYCPGTWCFIRHGRTAYLQ). Residues 200 to 224 (LYATMLLLLIVAVLACNISVILNLI) traverse the membrane as a helical segment. At 225–262 (RMHRRSRRSRCGLSGSSLRGPGSRRRGERTSMAEETDH) the chain is on the cytoplasmic side. A disordered region spans residues 234–255 (RCGLSGSSLRGPGSRRRGERTS). The span at 235–245 (CGLSGSSLRGP) shows a compositional bias: low complexity. The helical transmembrane segment at 263–286 (LILLAIMTITFAICSLPFTIFAYM) threads the bilayer. Residues 287–299 (DETSSLKEKWDLR) lie on the Extracellular side of the membrane. A helical membrane pass occupies residues 300–323 (ALRFLSVNSIIDPWVFAILRPPVL). At 324-362 (RLMRSVLCCRTSLRTQEAQQTSCSTQSSASKQTDLCGQL) the chain is on the cytoplasmic side.

The protein belongs to the G-protein coupled receptor 1 family.

The protein localises to the cell membrane. Functionally, receptor for prostaglandin E2 (PGE2). The activity of this receptor is mediated by G(s) proteins that stimulate adenylate cyclase. The subsequent raise in intracellular cAMP is responsible for the relaxing effect of this receptor on smooth muscle. In Mus musculus (Mouse), this protein is Prostaglandin E2 receptor EP2 subtype (Ptger2).